Here is a 164-residue protein sequence, read N- to C-terminus: ATP synthase subunit b 2 (164 aa).

Residues 4–24 (TFWAFVGLVLFLALLVYFQIP) traverse the membrane as a helical segment.

It belongs to the ATPase B chain family. F-type ATPases have 2 components, F(1) - the catalytic core - and F(0) - the membrane proton channel. F(1) has five subunits: alpha(3), beta(3), gamma(1), delta(1), epsilon(1). F(0) has three main subunits: a(1), b(2) and c(10-14). The alpha and beta chains form an alternating ring which encloses part of the gamma chain. F(1) is attached to F(0) by a central stalk formed by the gamma and epsilon chains, while a peripheral stalk is formed by the delta and b chains.

It is found in the cell inner membrane. In terms of biological role, f(1)F(0) ATP synthase produces ATP from ADP in the presence of a proton or sodium gradient. F-type ATPases consist of two structural domains, F(1) containing the extramembraneous catalytic core and F(0) containing the membrane proton channel, linked together by a central stalk and a peripheral stalk. During catalysis, ATP synthesis in the catalytic domain of F(1) is coupled via a rotary mechanism of the central stalk subunits to proton translocation. Its function is as follows. Component of the F(0) channel, it forms part of the peripheral stalk, linking F(1) to F(0). The chain is ATP synthase subunit b 2 from Bartonella tribocorum (strain CIP 105476 / IBS 506).